A 446-amino-acid chain; its full sequence is Exodeoxyribonuclease 7 large subunit (446 aa).

Belongs to the XseA family. As to quaternary structure, heterooligomer composed of large and small subunits.

The protein resides in the cytoplasm. It catalyses the reaction Exonucleolytic cleavage in either 5'- to 3'- or 3'- to 5'-direction to yield nucleoside 5'-phosphates.. In terms of biological role, bidirectionally degrades single-stranded DNA into large acid-insoluble oligonucleotides, which are then degraded further into small acid-soluble oligonucleotides. This is Exodeoxyribonuclease 7 large subunit from Streptococcus agalactiae serotype III (strain NEM316).